A 161-amino-acid polypeptide reads, in one-letter code: Nucleotide-binding protein PputW619_0959 (161 aa).

The protein belongs to the YajQ family.

Functionally, nucleotide-binding protein. This Pseudomonas putida (strain W619) protein is Nucleotide-binding protein PputW619_0959.